The following is a 289-amino-acid chain: F-box protein PP2-B15 (289 aa).

Positions 1 to 43 (MMLPEACVATILSFTTPADTISSAAVSSVFRVAGDSDFVWEKF) constitute an F-box domain.

This is F-box protein PP2-B15 (PP2B15) from Arabidopsis thaliana (Mouse-ear cress).